We begin with the raw amino-acid sequence, 506 residues long: Methylthioalkylmalate synthase 2, chloroplastic (506 aa).

A chloroplast-targeting transit peptide spans 1-49 (MASSLLTSSGMIPTTGSTVVGRSVLPFQSSLHSLRLTHSYKNPALFISC). The Pyruvate carboxyltransferase domain maps to 85-359 (VRVFDTTLRD…YTRIDTRQIM (275 aa)).

It belongs to the alpha-IPM synthase/homocitrate synthase family.

The protein resides in the plastid. It is found in the chloroplast. The enzyme catalyses an omega-(methylsulfanyl)-2-oxoalkanoate + acetyl-CoA + H2O = a 2-(omega-methylsulfanyl)alkylmalate + CoA + H(+). Catalyzes only the first methionine chain elongation cycle. In Arabidopsis thaliana (Mouse-ear cress), this protein is Methylthioalkylmalate synthase 2, chloroplastic (MAM2).